Reading from the N-terminus, the 335-residue chain is MTDVLASAERVLRDGIGLTEPELRAVLDVDDDSLPRLLDLAHRVRRRWCGPGVEIEGIVSVKTGGCPEDCHFCSQSGRFDSPVRSAWLDIPNLVTAAEQTAATGATEFCIVAAVRGPDDRLMRQVRAAVRAIREAVDINISCSLGILTPDQAAELAEIGVHRYNHNLETARSYFPSVVTTHTWEERWQTLQLVRAAGMEVCCGGILGMGESLDQRAEFAAQLADLDPDEVPLNFLDPRPGTPFADLPVVSVAEALRAAAMFRLALPRTILRFAGGREITLGDAGTRDALRGGVNGLIVGNYLTTLGRDPAADLALLAELGEPIRRSELQALSQAL.

The 224-residue stretch at 53–276 (VEIEGIVSVK…RTILRFAGGR (224 aa)) folds into the Radical SAM core domain. Positions 66, 70, and 73 each coordinate [4Fe-4S] cluster. [2Fe-2S] cluster-binding residues include Cys109, Cys142, Cys201, and Arg271.

The protein belongs to the radical SAM superfamily. Biotin synthase family. Homodimer. Requires [4Fe-4S] cluster as cofactor. [2Fe-2S] cluster serves as cofactor.

The catalysed reaction is (4R,5S)-dethiobiotin + (sulfur carrier)-SH + 2 reduced [2Fe-2S]-[ferredoxin] + 2 S-adenosyl-L-methionine = (sulfur carrier)-H + biotin + 2 5'-deoxyadenosine + 2 L-methionine + 2 oxidized [2Fe-2S]-[ferredoxin]. Its pathway is cofactor biosynthesis; biotin biosynthesis; biotin from 7,8-diaminononanoate: step 2/2. In terms of biological role, catalyzes the conversion of dethiobiotin (DTB) to biotin by the insertion of a sulfur atom into dethiobiotin via a radical-based mechanism. This Acidothermus cellulolyticus (strain ATCC 43068 / DSM 8971 / 11B) protein is Biotin synthase.